The chain runs to 398 residues: Tryptophan synthase beta chain (398 aa).

Lysine 88 is subject to N6-(pyridoxal phosphate)lysine.

Belongs to the TrpB family. In terms of assembly, tetramer of two alpha and two beta chains. Pyridoxal 5'-phosphate is required as a cofactor.

It carries out the reaction (1S,2R)-1-C-(indol-3-yl)glycerol 3-phosphate + L-serine = D-glyceraldehyde 3-phosphate + L-tryptophan + H2O. Its pathway is amino-acid biosynthesis; L-tryptophan biosynthesis; L-tryptophan from chorismate: step 5/5. Functionally, the beta subunit is responsible for the synthesis of L-tryptophan from indole and L-serine. This Actinobacillus succinogenes (strain ATCC 55618 / DSM 22257 / CCUG 43843 / 130Z) protein is Tryptophan synthase beta chain.